We begin with the raw amino-acid sequence, 222 residues long: Interleukin-12 subunit alpha (222 aa).

Positions 1-25 are cleaved as a signal peptide; the sequence is MCPPRGLLLVTILVLLSHLDHLTWA. Cystine bridges form between cysteine 40-cysteine 113, cysteine 67-cysteine 199, and cysteine 88-cysteine 126. 3 N-linked (GlcNAc...) asparagine glycosylation sites follow: asparagine 42, asparagine 96, and asparagine 110.

Belongs to the IL-6 superfamily. Heterodimer with IL12B; disulfide-linked. This heterodimer is known as interleukin IL-12. Heterodimer with EBI3/IL27B; not disulfide-linked. This heterodimer is known as interleukin IL-35. Interacts with NBR1; this interaction promotes IL-12 secretion.

It localises to the secreted. Heterodimerizes with IL12B to form the IL-12 cytokine or with EBI3/IL27B to form the IL-35 cytokine. IL-12 is primarily produced by professional antigen-presenting cells (APCs) such as B-cells and dendritic cells (DCs) as well as macrophages and granulocytes and regulates T-cell and natural killer-cell responses, induces the production of interferon-gamma (IFN-gamma), favors the differentiation of T-helper 1 (Th1) cells and is an important link between innate resistance and adaptive immunity. Mechanistically, exerts its biological effects through a receptor composed of IL12R1 and IL12R2 subunits. Binding to the receptor results in the rapid tyrosine phosphorylation of a number of cellular substrates including the JAK family kinases TYK2 and JAK2. In turn, recruited STAT4 gets phosphorylated and translocates to the nucleus where it regulates cytokine/growth factor responsive genes. As part of IL-35, plays essential roles in maintaining the immune homeostasis of the liver microenvironment and also functions as an immune-suppressive cytokine. Mediates biological events through unconventional receptors composed of IL12RB2 and gp130/IL6ST heterodimers or homodimers. Signaling requires the transcription factors STAT1 and STAT4, which form a unique heterodimer that binds to distinct DNA sites. This chain is Interleukin-12 subunit alpha (IL12A), found in Canis lupus familiaris (Dog).